Here is a 314-residue protein sequence, read N- to C-terminus: MSSENKKEPLLVITGPTATGKSEVGVLVAEKLGGEIISADSMLIYRGMDIGTAKPTSADRRGIPHHMIDIVEPDQDYNVALYRKQAMAVIKKVLERGNLPIVVGGTGLYIEALIRNYSFGGAGTDKTLRKKLQKEAAESPFLLHQRLAKIDPATASQLHPANTRRVIRALEVYYLTGKPISNFKRLDEPDPPFNLLMFGLTMEREALYRRIEKRVDRMIAMGLIEEVQNLLQRGFSPRLNSMRGLGYKEMISYLNGTLSLEEAVEVLKRNTRRFAKRQMTWFRRYKEIRWLKIENFADCEAIAQEIARCTEGVL.

15-22 contributes to the ATP binding site; sequence GPTATGKS. 17-22 lines the substrate pocket; the sequence is TATGKS. Positions 40–43 are interaction with substrate tRNA; it reads DSML.

This sequence belongs to the IPP transferase family. Monomer. Requires Mg(2+) as cofactor.

It catalyses the reaction adenosine(37) in tRNA + dimethylallyl diphosphate = N(6)-dimethylallyladenosine(37) in tRNA + diphosphate. Its function is as follows. Catalyzes the transfer of a dimethylallyl group onto the adenine at position 37 in tRNAs that read codons beginning with uridine, leading to the formation of N6-(dimethylallyl)adenosine (i(6)A). This Pelotomaculum thermopropionicum (strain DSM 13744 / JCM 10971 / SI) protein is tRNA dimethylallyltransferase.